The sequence spans 476 residues: Cysteine--tRNA ligase (476 aa).

C29 contributes to the Zn(2+) binding site. The short motif at 31–41 (PTVYDYTHLGH) is the 'HIGH' region element. Residues C209, H234, and E238 each coordinate Zn(2+). The 'KMSKS' region signature appears at 266–270 (KMSKS). K269 lines the ATP pocket.

It belongs to the class-I aminoacyl-tRNA synthetase family. Requires Zn(2+) as cofactor.

It is found in the cytoplasm. The enzyme catalyses tRNA(Cys) + L-cysteine + ATP = L-cysteinyl-tRNA(Cys) + AMP + diphosphate. The protein is Cysteine--tRNA ligase of Thermococcus onnurineus (strain NA1).